We begin with the raw amino-acid sequence, 155 residues long: Xanthine-guanine phosphoribosyltransferase (155 aa).

Residues 37-38, Arg69, and 90-98 each bind 5-phospho-alpha-D-ribose 1-diphosphate; these read RG and EDLVDTGTT. GMP is bound at residue Arg69. Asp91 is a binding site for Mg(2+). Positions 94 and 137 each coordinate guanine. 2 residues coordinate xanthine: Asp94 and Ile137. GMP-binding positions include 94–98 and 136–137; these read DTGTT and WI.

The protein belongs to the purine/pyrimidine phosphoribosyltransferase family. XGPT subfamily. Homotetramer. Mg(2+) is required as a cofactor.

The protein localises to the cell inner membrane. The enzyme catalyses GMP + diphosphate = guanine + 5-phospho-alpha-D-ribose 1-diphosphate. It carries out the reaction XMP + diphosphate = xanthine + 5-phospho-alpha-D-ribose 1-diphosphate. It catalyses the reaction IMP + diphosphate = hypoxanthine + 5-phospho-alpha-D-ribose 1-diphosphate. It functions in the pathway purine metabolism; GMP biosynthesis via salvage pathway; GMP from guanine: step 1/1. Its pathway is purine metabolism; XMP biosynthesis via salvage pathway; XMP from xanthine: step 1/1. Its function is as follows. Purine salvage pathway enzyme that catalyzes the transfer of the ribosyl-5-phosphate group from 5-phospho-alpha-D-ribose 1-diphosphate (PRPP) to the N9 position of the 6-oxopurines guanine and xanthine to form the corresponding ribonucleotides GMP (guanosine 5'-monophosphate) and XMP (xanthosine 5'-monophosphate), with the release of PPi. To a lesser extent, also acts on hypoxanthine. The sequence is that of Xanthine-guanine phosphoribosyltransferase from Aeromonas hydrophila subsp. hydrophila (strain ATCC 7966 / DSM 30187 / BCRC 13018 / CCUG 14551 / JCM 1027 / KCTC 2358 / NCIMB 9240 / NCTC 8049).